The chain runs to 141 residues: Large ribosomal subunit protein uL11 (141 aa).

Belongs to the universal ribosomal protein uL11 family. In terms of assembly, part of the ribosomal stalk of the 50S ribosomal subunit. Interacts with L10 and the large rRNA to form the base of the stalk. L10 forms an elongated spine to which L12 dimers bind in a sequential fashion forming a multimeric L10(L12)X complex. In terms of processing, one or more lysine residues are methylated.

Its function is as follows. Forms part of the ribosomal stalk which helps the ribosome interact with GTP-bound translation factors. This is Large ribosomal subunit protein uL11 from Microcystis aeruginosa (strain NIES-843 / IAM M-2473).